The following is a 333-amino-acid chain: Pantothenate synthetase (333 aa).

ATP is bound at residue 27–34 (MGALHEGH). The active-site Proton donor is His34. Residue Gln61 coordinates (R)-pantoate. Gln61 contributes to the beta-alanine binding site. Residue 148-151 (GQKD) participates in ATP binding. Gln154 contributes to the (R)-pantoate binding site. ATP contacts are provided by residues Val177 and 185-188 (LSSR).

It belongs to the pantothenate synthetase family. Homodimer.

The protein localises to the cytoplasm. The catalysed reaction is (R)-pantoate + beta-alanine + ATP = (R)-pantothenate + AMP + diphosphate + H(+). It functions in the pathway cofactor biosynthesis; (R)-pantothenate biosynthesis; (R)-pantothenate from (R)-pantoate and beta-alanine: step 1/1. Catalyzes the condensation of pantoate with beta-alanine in an ATP-dependent reaction via a pantoyl-adenylate intermediate. This is Pantothenate synthetase from Streptomyces avermitilis (strain ATCC 31267 / DSM 46492 / JCM 5070 / NBRC 14893 / NCIMB 12804 / NRRL 8165 / MA-4680).